The chain runs to 329 residues: Aurora kinase B (329 aa).

Residues 1-14 (MTLSRAKHANRNHL) show a composition bias toward basic residues. The interval 1-21 (MTLSRAKHANRNHLPHLLAKV) is disordered. Positions 53–305 (FEMGAHLGRG…LVDVMTHYWV (253 aa)) constitute a Protein kinase domain. ATP-binding positions include 59–67 (LGRGKFGRV) and lysine 82. Aspartate 178 functions as the Proton acceptor in the catalytic mechanism.

This sequence belongs to the protein kinase superfamily. Ser/Thr protein kinase family. Aurora subfamily. Interacts with Incenp and Cdc37. Mg(2+) serves as cofactor.

Its subcellular location is the chromosome. It is found in the cytoplasm. It localises to the cytoskeleton. The protein resides in the midbody. The enzyme catalyses L-seryl-[protein] + ATP = O-phospho-L-seryl-[protein] + ADP + H(+). It carries out the reaction L-threonyl-[protein] + ATP = O-phospho-L-threonyl-[protein] + ADP + H(+). Its function is as follows. Serine/threonine-protein kinase that mediates both meiotic and mitotic chromosome segregation. Required for histone H3 'Ser-10' phosphorylation. Phosphorylates mei-S332 within residues 124-126 and stabilizes its association with centromeres during meiosis. May regulate the function of the ESCRT-III complex core component shrb during abscission of germline cells in oogenesis. The polypeptide is Aurora kinase B (Drosophila melanogaster (Fruit fly)).